The sequence spans 191 residues: Small ribosomal subunit protein eS7z (191 aa).

At methionine 1 the chain carries N-acetylmethionine. Positions 15–50 (ELSELDEQVAQAFFDLENTNQELKSELKDLYVNSAV) form a coiled coil.

It belongs to the eukaryotic ribosomal protein eS7 family.

This is Small ribosomal subunit protein eS7z (RPS7A) from Arabidopsis thaliana (Mouse-ear cress).